The primary structure comprises 182 residues: ADP-ribosylation factor 3 (182 aa).

G2 is lipidated: N-myristoyl glycine. GTP contacts are provided by residues 24 to 31, 67 to 71, and 126 to 129; these read GLDNAGKT, DLGGQ, and NKQD.

Belongs to the small GTPase superfamily. Arf family. In terms of assembly, interacts with GRIP; but preferentially when bound to GTP.

It is found in the golgi apparatus. Its function is as follows. GTP-binding protein involved in protein trafficking; may modulate vesicle budding and uncoating within the Golgi apparatus. The protein is ADP-ribosylation factor 3 (ARF3) of Arabidopsis thaliana (Mouse-ear cress).